The sequence spans 294 residues: 3-methyl-2-oxobutanoate hydroxymethyltransferase (294 aa).

Positions 1 to 12 are enriched in polar residues; sequence MSASAESTNATP. The tract at residues 1–21 is disordered; the sequence is MSASAESTNATPYGTLPPTAA. Residues aspartate 69 and aspartate 112 each contribute to the Mg(2+) site. 3-methyl-2-oxobutanoate-binding positions include 69–70, aspartate 112, and lysine 141; that span reads DS. Glutamate 143 is a Mg(2+) binding site. Residue glutamate 210 is the Proton acceptor of the active site.

Belongs to the PanB family. Homodecamer; pentamer of dimers. It depends on Mg(2+) as a cofactor.

The protein resides in the cytoplasm. It catalyses the reaction 3-methyl-2-oxobutanoate + (6R)-5,10-methylene-5,6,7,8-tetrahydrofolate + H2O = 2-dehydropantoate + (6S)-5,6,7,8-tetrahydrofolate. It participates in cofactor biosynthesis; (R)-pantothenate biosynthesis; (R)-pantoate from 3-methyl-2-oxobutanoate: step 1/2. Catalyzes the reversible reaction in which hydroxymethyl group from 5,10-methylenetetrahydrofolate is transferred onto alpha-ketoisovalerate to form ketopantoate. In Albidiferax ferrireducens (strain ATCC BAA-621 / DSM 15236 / T118) (Rhodoferax ferrireducens), this protein is 3-methyl-2-oxobutanoate hydroxymethyltransferase.